The following is a 71-amino-acid chain: Pro-glucagon (71 aa).

This sequence belongs to the glucagon family.

The protein localises to the secreted. In terms of biological role, plays a key role in glucose metabolism and homeostasis. Regulates blood glucose by increasing gluconeogenesis and decreasing glycolysis. The polypeptide is Pro-glucagon (gcg) (Piaractus mesopotamicus (Small-scaled pacu)).